The sequence spans 157 residues: C-type lectin 9a (157 aa).

The signal sequence occupies residues 1-23; that stretch reads MGRFIFVSFGLLVVFLSLSGTGA. 3 disulfide bridges follow: Cys27/Cys38, Cys55/Cys151, and Cys126/Cys143. One can recognise a C-type lectin domain in the interval 34–152; sequence YDQYCYKPFN…CQAKKPFVCK (119 aa).

Belongs to the snaclec family. In terms of assembly, heteromultimer; disulfide-linked. In terms of tissue distribution, expressed by the venom gland.

The protein resides in the secreted. Interferes with one step of hemostasis (modulation of platelet aggregation, or coagulation cascade, for example). The protein is C-type lectin 9a of Crotalus adamanteus (Eastern diamondback rattlesnake).